We begin with the raw amino-acid sequence, 629 residues long: tRNA uridine 5-carboxymethylaminomethyl modification enzyme MnmG (629 aa).

FAD contacts are provided by residues 15–20, Val-127, and Ser-182; that span reads GAGHAG. Residues 203 to 227 are disordered; it reads TPPRVKSSTIDYSKTEEQPGDDHPR. Basic and acidic residues predominate over residues 215–227; the sequence is SKTEEQPGDDHPR. 274–288 contributes to the NAD(+) binding site; that stretch reads GARYCPSIEDKIVRF. An FAD-binding site is contributed by Gln-371.

This sequence belongs to the MnmG family. Homodimer. Heterotetramer of two MnmE and two MnmG subunits. Requires FAD as cofactor.

It localises to the cytoplasm. NAD-binding protein involved in the addition of a carboxymethylaminomethyl (cmnm) group at the wobble position (U34) of certain tRNAs, forming tRNA-cmnm(5)s(2)U34. This Listeria welshimeri serovar 6b (strain ATCC 35897 / DSM 20650 / CCUG 15529 / CIP 8149 / NCTC 11857 / SLCC 5334 / V8) protein is tRNA uridine 5-carboxymethylaminomethyl modification enzyme MnmG.